The following is a 352-amino-acid chain: Heavy metal-associated isoprenylated plant protein 36 (352 aa).

The 64-residue stretch at 29–92 (YTTWVLRVSI…KIMKAGRHAE (64 aa)) folds into the HMA domain. A metal cation is bound by residues C40 and C43. 3 disordered regions span residues 96-150 (TSME…GNFD), 162-211 (QLQP…GPPE), and 229-252 (PHLHHHQQQNHPYPTVHSPPRHHP). Residues 97-107 (SMENNINNDCN) are compositionally biased toward polar residues. Residues 118-128 (ETSGDEDDDEN) are compositionally biased toward acidic residues. Residues 133 to 148 (NGGGDVGGGGGGGGGN) show a composition bias toward gly residues. The span at 172–183 (KKKKKKKKKKKS) shows a compositional bias: basic residues. The segment covering 192-203 (EGGGGGGGGGGP) has biased composition (gly residues). Position 349 is a cysteine methyl ester (C349). Residue C349 is the site of S-farnesyl cysteine attachment. The propeptide at 350–352 (CVM) is removed in mature form.

Belongs to the HIPP family.

Its function is as follows. Heavy-metal-binding protein. The protein is Heavy metal-associated isoprenylated plant protein 36 of Arabidopsis thaliana (Mouse-ear cress).